Here is a 523-residue protein sequence, read N- to C-terminus: Sorting nexin-2 (523 aa).

A disordered region spans residues 1 to 104; sequence MAAEREPPPL…EPSPAVTPVT (104 aa). Composition is skewed to low complexity over residues 27–48 and 93–104; these read LFTSTVSTLESSPSSPEPTSLP and SSEPSPAVTPVT. Phosphoserine is present on Ser97. 2 positions are modified to phosphothreonine: Thr101 and Thr104. Ser117 and Ser119 each carry phosphoserine. The 130-residue stretch at 140 to 269 folds into the PX domain; it reads FDIEIGVSDP…QFLESSELPR (130 aa). Residues Arg183, Ser185, Lys211, and Arg235 each coordinate a 1,2-diacyl-sn-glycero-3-phospho-(1D-myo-inositol-3-phosphate). Ser185 carries the phosphoserine modification. The interval 260-523 is interaction with RhoG; that stretch reads QFLESSELPR…AFLPEAKAIA (264 aa). Phosphoserine is present on Ser277. The membrane-binding amphipathic helix stretch occupies residues 278 to 295; sequence GAGILRMVNKAADAVNKM. Residues 299 to 523 form the BAR domain; that stretch reads MNESDAWFEE…AFLPEAKAIA (225 aa). Residue Lys473 is modified to N6-acetyllysine.

It belongs to the sorting nexin family. In terms of assembly, predominantly forms heterodimers with BAR domain-containing sorting nexins SNX5, SNX6 and SNX32; can self-associate to form homodimers. The heterodimers are proposed to self-assemble into helical arrays on the membrane to stabilize and expand local membrane curvature underlying endosomal tubule formation. Thought to be a component of the originally described retromer complex (also called SNX-BAR retromer) which is a pentamer containing the heterotrimeric retromer cargo-selective complex (CSC), also described as vacuolar protein sorting subcomplex (VPS), and a heterodimeric membrane-deforming subcomplex formed between SNX1 or SNX2 and SNX5 or SNX6 (also called SNX-BAR subcomplex); the respective CSC and SNX-BAR subcomplexes associate with low affinity. Interacts with SNX5, SNX6, SNX32, VPS26A, VPS29, VPS35, FNBP1, KALRN, RHOG (GDP-bound form).

The protein localises to the early endosome membrane. The protein resides in the cell projection. It localises to the lamellipodium. In terms of biological role, involved in several stages of intracellular trafficking. Interacts with membranes containing phosphatidylinositol 3-phosphate (PtdIns(3P)) or phosphatidylinositol 3,5-bisphosphate (PtdIns(3,5)P2). Acts in part as component of the retromer membrane-deforming SNX-BAR subcomplex. The SNX-BAR retromer mediates retrograde transport of cargo proteins from endosomes to the trans-Golgi network (TGN) and is involved in endosome-to-plasma membrane transport for cargo protein recycling. The SNX-BAR subcomplex functions to deform the donor membrane into a tubular profile called endosome-to-TGN transport carrier (ETC). Can sense membrane curvature and has in vitro vesicle-to-membrane remodeling activity. Required for retrograde endosome-to-TGN transport of TGN38. Promotes KALRN- and RHOG-dependent but retromer-independent membrane remodeling such as lamellipodium formation; the function is dependent on GEF activity of KALRN. In Pongo abelii (Sumatran orangutan), this protein is Sorting nexin-2 (SNX2).